An 83-amino-acid chain; its full sequence is Mu-theraphotoxin-Hhn2j 3 (83 aa).

The first 21 residues, 1-21, serve as a signal peptide directing secretion; it reads MKALMFLALAGLVLLFVVGYA. Residues 22-48 constitute a propeptide that is removed on maturation; that stretch reads SESEEKEFPIELLSKIFAVDVFKGEER. 3 disulfide bridges follow: Cys-50–Cys-65, Cys-57–Cys-70, and Cys-64–Cys-77. Leu-81 is modified (leucine amide).

It belongs to the neurotoxin 10 (Hwtx-1) family. 15 (Hntx-3) subfamily. Monomer. Expressed by the venom gland.

The protein resides in the secreted. Lethal neurotoxin. Selectively blocks tetrodotoxin-sensitive voltage-gated sodium channels (Nav). Does not affect tetrodotoxin-resistant voltage-gated sodium channels or calcium channels. This is Mu-theraphotoxin-Hhn2j 3 from Cyriopagopus hainanus (Chinese bird spider).